Reading from the N-terminus, the 274-residue chain is Phosphate import ATP-binding protein PstB (274 aa).

Residues 28 to 269 (VTVRDLNFYY…PNDRRTQDYI (242 aa)) enclose the ABC transporter domain. Residue 60 to 67 (GPSGCGKS) participates in ATP binding.

Belongs to the ABC transporter superfamily. Phosphate importer (TC 3.A.1.7) family. As to quaternary structure, the complex is composed of two ATP-binding proteins (PstB), two transmembrane proteins (PstC and PstA) and a solute-binding protein (PstS).

The protein resides in the cell inner membrane. It carries out the reaction phosphate(out) + ATP + H2O = ADP + 2 phosphate(in) + H(+). Its function is as follows. Part of the ABC transporter complex PstSACB involved in phosphate import. Responsible for energy coupling to the transport system. The sequence is that of Phosphate import ATP-binding protein PstB from Rhodopseudomonas palustris (strain HaA2).